Consider the following 1034-residue polypeptide: FACT complex subunit spt-16 (1034 aa).

Composition is skewed to basic and acidic residues over residues 433 to 448 (EEQE…DQKK), 463 to 481 (TRNK…KELG), and 493 to 503 (SKQDGGTDEKK). The interval 433–511 (EEQENRETER…KKVKKSNVSY (79 aa)) is disordered. The stretch at 617–642 (LSTAFRQIKEMQKRFRTEEAEEREKD) forms a coiled coil. 2 stretches are compositionally biased toward acidic residues: residues 926-950 (AESE…EADA) and 959-983 (SDED…DSDE). The disordered stretch occupies residues 926–1034 (AESEGEDAGD…KAGPSHKRRK (109 aa)). Over residues 984 to 1020 (SEGKDWSDLEEEAAKADKRREVEDGGRDRDRDRDRKR) the composition is skewed to basic and acidic residues. Positions 1021–1034 (PSSSKAGPSHKRRK) are enriched in basic residues.

Belongs to the peptidase M24 family. SPT16 subfamily. Component of the FACT complex, a stable heterodimer of spt-16 and hmg-3 or hmg-4.

Its subcellular location is the nucleus. It localises to the chromosome. Component of the FACT complex, a general chromatin factor that acts to reorganize nucleosomes. The FACT complex is involved in multiple processes that require DNA as a template such as mRNA elongation, DNA replication and DNA repair. During transcription elongation the FACT complex acts as a histone chaperone that both destabilizes and restores nucleosomal structure. It facilitates the passage of RNA polymerase II and transcription by promoting the dissociation of one histone H2A-H2B dimer from the nucleosome, then subsequently promotes the reestablishment of the nucleosome following the passage of RNA polymerase II. This is FACT complex subunit spt-16 (spt-16) from Caenorhabditis briggsae.